Consider the following 228-residue polypeptide: Ribonuclease 3 (228 aa).

Residues 7 to 132 (LSAFMDRLGH…VIAAVYLDAG (126 aa)) form the RNase III domain. Mg(2+) is bound at residue Glu-45. Asp-49 is a catalytic residue. Asp-118 and Glu-121 together coordinate Mg(2+). Glu-121 is an active-site residue. The DRBM domain occupies 157 to 226 (DPKTALQEWA…AKALLERLER (70 aa)).

It belongs to the ribonuclease III family. Homodimer. Mg(2+) serves as cofactor.

It is found in the cytoplasm. The catalysed reaction is Endonucleolytic cleavage to 5'-phosphomonoester.. Its function is as follows. Digests double-stranded RNA. Involved in the processing of ribosomal RNA precursors and of some mRNAs. Complements an E.coli disruption mutant, but the E.coli enzyme does not cleave R.capsulatus rRNA precursor, showing substrate recognition is different. Probably also processes some mRNAs, and tRNAs when they are encoded in the rRNA operon. Probably processes pre-crRNA and tracrRNA of type II CRISPR loci if present in the organism. The chain is Ribonuclease 3 (rnc) from Rhodobacter capsulatus (Rhodopseudomonas capsulata).